Here is a 366-residue protein sequence, read N- to C-terminus: Glutamate 5-kinase (366 aa).

Lys-17 contacts ATP. 3 residues coordinate substrate: Ser-57, Asp-144, and Asn-156. Residues 176 to 177 and 216 to 222 each bind ATP; these read SD and TGGMASK. The PUA domain occupies 278-352; the sequence is RGALVLDDGA…GRSTTELPDT (75 aa).

This sequence belongs to the glutamate 5-kinase family.

Its subcellular location is the cytoplasm. The catalysed reaction is L-glutamate + ATP = L-glutamyl 5-phosphate + ADP. It participates in amino-acid biosynthesis; L-proline biosynthesis; L-glutamate 5-semialdehyde from L-glutamate: step 1/2. Its function is as follows. Catalyzes the transfer of a phosphate group to glutamate to form L-glutamate 5-phosphate. The protein is Glutamate 5-kinase of Nocardia farcinica (strain IFM 10152).